A 147-amino-acid polypeptide reads, in one-letter code: MKFSTILAIPFAIAFANAAAAPAVTAAPAPAADNPYTIYPPVPKTASINGFADRIYDQIPKCAQECVKQSTSSTPCPYWDTGCLCVIPNFTGAVGNCVASKCRGADVTNFRKLAVGACAAAGVWDPYWIIPASVSSALDAAATATGN.

Positions 1-20 are cleaved as a signal peptide; that stretch reads MKFSTILAIPFAIAFANAAA. A CFEM domain is found at 34-145; that stretch reads NPYTIYPPVP…SALDAAATAT (112 aa). 4 cysteine pairs are disulfide-bonded: Cys-62–Cys-102, Cys-66–Cys-97, Cys-76–Cys-83, and Cys-85–Cys-118. Residue Asp-80 coordinates heme.

The protein belongs to the RBT5 family. As to quaternary structure, homodimer. The possibility of a transient honotrimer assembly of the holo protein is not ruled out.

It is found in the secreted. In terms of biological role, secreted heme-binding protein involved in the utilization of iron from human hemoglobin during hyphal growth. May also play a role in non-hemoglobin iron utilization. Heme transfer occurs between PGA7, RBT5 and CSA2 supporting a model in which the 3 CFEM proteins cooperate in a heme-acquisition system and form a cross-cell wall heme-transfer cascade. The ability to acquire iron from host tissues is a major virulence factor of pathogenic microorganisms. This is Secreted hemophore CSA2 (CSA2) from Candida albicans (strain SC5314 / ATCC MYA-2876) (Yeast).